We begin with the raw amino-acid sequence, 363 residues long: Peptide chain release factor 1 (363 aa).

Residue glutamine 237 is modified to N5-methylglutamine.

The protein belongs to the prokaryotic/mitochondrial release factor family. In terms of processing, methylated by PrmC. Methylation increases the termination efficiency of RF1.

It is found in the cytoplasm. In terms of biological role, peptide chain release factor 1 directs the termination of translation in response to the peptide chain termination codons UAG and UAA. This chain is Peptide chain release factor 1, found in Hydrogenovibrio crunogenus (strain DSM 25203 / XCL-2) (Thiomicrospira crunogena).